Consider the following 335-residue polypeptide: Pyridoxal 5'-phosphate synthase subunit PdxS (335 aa).

D-ribose 5-phosphate is bound at residue D30. K87 functions as the Schiff-base intermediate with D-ribose 5-phosphate in the catalytic mechanism. G159 provides a ligand contact to D-ribose 5-phosphate. R171 lines the D-glyceraldehyde 3-phosphate pocket. Residues G257 and 278–279 (GS) contribute to the D-ribose 5-phosphate site.

Belongs to the PdxS/SNZ family. In the presence of PdxT, forms a dodecamer of heterodimers.

The catalysed reaction is aldehydo-D-ribose 5-phosphate + D-glyceraldehyde 3-phosphate + L-glutamine = pyridoxal 5'-phosphate + L-glutamate + phosphate + 3 H2O + H(+). It participates in cofactor biosynthesis; pyridoxal 5'-phosphate biosynthesis. Catalyzes the formation of pyridoxal 5'-phosphate from ribose 5-phosphate (RBP), glyceraldehyde 3-phosphate (G3P) and ammonia. The ammonia is provided by the PdxT subunit. Can also use ribulose 5-phosphate and dihydroxyacetone phosphate as substrates, resulting from enzyme-catalyzed isomerization of RBP and G3P, respectively. This chain is Pyridoxal 5'-phosphate synthase subunit PdxS, found in Thermococcus gammatolerans (strain DSM 15229 / JCM 11827 / EJ3).